Consider the following 294-residue polypeptide: Indole-3-glycerol phosphate synthase (294 aa).

The protein belongs to the TrpC family.

The enzyme catalyses 1-(2-carboxyphenylamino)-1-deoxy-D-ribulose 5-phosphate + H(+) = (1S,2R)-1-C-(indol-3-yl)glycerol 3-phosphate + CO2 + H2O. Its pathway is amino-acid biosynthesis; L-tryptophan biosynthesis; L-tryptophan from chorismate: step 4/5. In Crocosphaera subtropica (strain ATCC 51142 / BH68) (Cyanothece sp. (strain ATCC 51142)), this protein is Indole-3-glycerol phosphate synthase.